A 525-amino-acid chain; its full sequence is Bifunctional purine biosynthesis protein PurH (525 aa).

One can recognise an MGS-like domain in the interval 1–149; the sequence is MSDPVIKRAL…KNHESVTVIT (149 aa).

The protein belongs to the PurH family.

It catalyses the reaction (6R)-10-formyltetrahydrofolate + 5-amino-1-(5-phospho-beta-D-ribosyl)imidazole-4-carboxamide = 5-formamido-1-(5-phospho-D-ribosyl)imidazole-4-carboxamide + (6S)-5,6,7,8-tetrahydrofolate. It carries out the reaction IMP + H2O = 5-formamido-1-(5-phospho-D-ribosyl)imidazole-4-carboxamide. It functions in the pathway purine metabolism; IMP biosynthesis via de novo pathway; 5-formamido-1-(5-phospho-D-ribosyl)imidazole-4-carboxamide from 5-amino-1-(5-phospho-D-ribosyl)imidazole-4-carboxamide (10-formyl THF route): step 1/1. It participates in purine metabolism; IMP biosynthesis via de novo pathway; IMP from 5-formamido-1-(5-phospho-D-ribosyl)imidazole-4-carboxamide: step 1/1. This Chlorobium phaeobacteroides (strain BS1) protein is Bifunctional purine biosynthesis protein PurH.